The primary structure comprises 734 residues: Ribosomal biogenesis protein LAS1L (734 aa).

The interval 204–255 (EGIEEEDQEEDKNIVVDDITEQKPEPQDDGKSTESDVKADGDSKGSEEVDSH) is disordered. Residues 214-255 (DKNIVVDDITEQKPEPQDDGKSTESDVKADGDSKGSEEVDSH) show a composition bias toward basic and acidic residues. Residues Lys-215 and Lys-226 each participate in a glycyl lysine isopeptide (Lys-Gly) (interchain with G-Cter in SUMO2) cross-link. A phosphoserine mark is found at Ser-441, Ser-523, and Ser-560. The span at 547-561 (GSEAKAQQQEEQGSV) shows a compositional bias: polar residues. The interval 547-619 (GSEAKAQQQE…PFSTGQESPT (73 aa)) is disordered. The segment covering 563 to 575 (DVKEEEKEEKEVL) has biased composition (basic and acidic residues). Over residues 578–605 (QVEEEEENDDQEEEEEDEDDEDDEEEDR) the composition is skewed to acidic residues. Residue Ser-617 is modified to Phosphoserine. Residues 636 to 655 (SAWQVSSEDVRWDTFPLGRM) form an interaction with NOL9 region.

The protein belongs to the LAS1 family. As to quaternary structure, component of some MLL1/MLL complex, at least composed of the core components KMT2A/MLL1, ASH2L, HCFC1/HCF1, WDR5 and RBBP5, as well as the facultative components BACC1, CHD8, E2F6, HSP70, INO80C, KANSL1, LAS1L, MAX, MCRS1, MGA, KAT8/MOF, PELP1, PHF20, PRP31, RING2, RUVB1/TIP49A, RUVB2/TIP49B, SENP3, TAF1, TAF4, TAF6, TAF7, TAF9 and TEX10. Component of the 5FMC complex, at least composed of PELP1, LAS1L, TEX10, WDR18 and SENP3; the complex interacts with methylated CHTOP and ZNF148. Interacts with NOL9 to form an ITS2 pre-rRNA endonuclease-kinase complex.

Its subcellular location is the nucleus. The protein localises to the nucleolus. The protein resides in the nucleoplasm. It is found in the cytoplasm. Its function is as follows. Required for the synthesis of the 60S ribosomal subunit and maturation of the 28S rRNA. Functions as a component of the Five Friends of Methylated CHTOP (5FMC) complex; the 5FMC complex is recruited to ZNF148 by methylated CHTOP, leading to desumoylation of ZNF148 and subsequent transactivation of ZNF148 target genes. Required for the efficient pre-rRNA processing at both ends of internal transcribed spacer 2 (ITS2). This chain is Ribosomal biogenesis protein LAS1L (LAS1L), found in Homo sapiens (Human).